Consider the following 292-residue polypeptide: Peroxidase 2 (292 aa).

4 disulfide bridges follow: Cys7–Cys86, Cys40–Cys45, Cys92–Cys288, and Cys171–Cys199. His38 acts as the Proton acceptor in catalysis. Ca(2+) contacts are provided by Asp39, Val42, Gly44, Asp46, and Ser48. Asn68 carries an N-linked (GlcNAc...) asparagine glycan. Residue Pro134 coordinates substrate. An N-linked (GlcNAc...) asparagine glycan is attached at Asn139. His164 contributes to the heme b binding site. Thr165 serves as a coordination point for Ca(2+). N-linked (GlcNAc...) asparagine glycosylation occurs at Asn179. Ca(2+) is bound by residues Asp210, Thr213, and Asp218.

This sequence belongs to the peroxidase family. Classical plant (class III) peroxidase subfamily. The cofactor is Ca(2+). It depends on heme b as a cofactor.

The catalysed reaction is 2 a phenolic donor + H2O2 = 2 a phenolic radical donor + 2 H2O. Functionally, removal of H(2)O(2), oxidation of toxic reductants, biosynthesis and degradation of lignin, suberization, auxin catabolism, response to environmental stresses such as wounding, pathogen attack and oxidative stress. These functions might be dependent on each isozyme/isoform in each plant tissue. In Cucumis sativus (Cucumber), this protein is Peroxidase 2.